Reading from the N-terminus, the 212-residue chain is Urease accessory protein UreG (212 aa).

15–22 serves as a coordination point for GTP; the sequence is GPVGSGKT.

This sequence belongs to the SIMIBI class G3E GTPase family. UreG subfamily. Homodimer. UreD, UreF and UreG form a complex that acts as a GTP-hydrolysis-dependent molecular chaperone, activating the urease apoprotein by helping to assemble the nickel containing metallocenter of UreC. The UreE protein probably delivers the nickel.

The protein localises to the cytoplasm. In terms of biological role, facilitates the functional incorporation of the urease nickel metallocenter. This process requires GTP hydrolysis, probably effectuated by UreG. This chain is Urease accessory protein UreG, found in Opitutus terrae (strain DSM 11246 / JCM 15787 / PB90-1).